The chain runs to 565 residues: uncharacterized protein (565 aa).

The next 10 helical transmembrane spans lie at 28 to 48 (IFHF…LPFA), 73 to 93 (ASYG…DTGL), 109 to 129 (VLAI…FLVW), 169 to 189 (LFLF…FYFI), 262 to 282 (IVIQ…YPVL), 315 to 335 (LIVT…VITS), 364 to 384 (SLIF…FGVI), 393 to 413 (VFPW…AMFI), 461 to 481 (AFLV…LLPL), and 526 to 546 (TLGL…LTFV).

It belongs to the TrkH potassium transport family.

It is found in the cell membrane. This is an uncharacterized protein from Mycoplasma pneumoniae (strain ATCC 29342 / M129 / Subtype 1) (Mycoplasmoides pneumoniae).